The sequence spans 308 residues: Methionyl-tRNA formyltransferase (308 aa).

A (6S)-5,6,7,8-tetrahydrofolate-binding site is contributed by 110–113 (SLLP).

The protein belongs to the Fmt family.

It carries out the reaction L-methionyl-tRNA(fMet) + (6R)-10-formyltetrahydrofolate = N-formyl-L-methionyl-tRNA(fMet) + (6S)-5,6,7,8-tetrahydrofolate + H(+). In terms of biological role, attaches a formyl group to the free amino group of methionyl-tRNA(fMet). The formyl group appears to play a dual role in the initiator identity of N-formylmethionyl-tRNA by promoting its recognition by IF2 and preventing the misappropriation of this tRNA by the elongation apparatus. This is Methionyl-tRNA formyltransferase from Neisseria meningitidis serogroup A / serotype 4A (strain DSM 15465 / Z2491).